Reading from the N-terminus, the 448-residue chain is NADP-specific glutamate dehydrogenase (448 aa).

Substrate-binding residues include lysine 88, glutamine 109, and lysine 112. Catalysis depends on lysine 124, which acts as the Proton donor. Residue glycine 163 participates in substrate binding. Residues threonine 207 and asparagine 238 each contribute to the NADP(+) site. A substrate-binding site is contributed by serine 381.

It belongs to the Glu/Leu/Phe/Val dehydrogenases family. In terms of assembly, homohexamer.

It carries out the reaction L-glutamate + NADP(+) + H2O = 2-oxoglutarate + NH4(+) + NADPH + H(+). Catalyzes the reversible oxidative deamination of glutamate to alpha-ketoglutarate and ammonia. The polypeptide is NADP-specific glutamate dehydrogenase (gdhA) (Helicobacter pylori (strain J99 / ATCC 700824) (Campylobacter pylori J99)).